Reading from the N-terminus, the 1349-residue chain is DNA-directed RNA polymerase subunit beta' (1349 aa).

The Zn(2+) site is built by Cys219, Cys293, Cys300, and Cys303. The tract at residues 1298-1349 (LDSPTLGESGFGSRRAERSVLDDEDELIADEVVDDDDFEEEEEDDEDDFDDE) is disordered. Positions 1319-1349 (DDEDELIADEVVDDDDFEEEEEDDEDDFDDE) are enriched in acidic residues.

It belongs to the RNA polymerase beta' chain family. RpoC2 subfamily. In terms of assembly, in cyanobacteria the RNAP catalytic core is composed of 2 alpha, 1 beta, 1 beta', 1 gamma and 1 omega subunit. When a sigma factor is associated with the core the holoenzyme is formed, which can initiate transcription. The cofactor is Zn(2+).

The catalysed reaction is RNA(n) + a ribonucleoside 5'-triphosphate = RNA(n+1) + diphosphate. In terms of biological role, DNA-dependent RNA polymerase catalyzes the transcription of DNA into RNA using the four ribonucleoside triphosphates as substrates. This Nostoc punctiforme (strain ATCC 29133 / PCC 73102) protein is DNA-directed RNA polymerase subunit beta'.